A 518-amino-acid chain; its full sequence is Bifunctional purine biosynthesis protein PurH (518 aa).

In terms of domain architecture, MGS-like spans 1–146 (MSPIALLSVS…KNHQDVLVVT (146 aa)).

It belongs to the PurH family.

The enzyme catalyses (6R)-10-formyltetrahydrofolate + 5-amino-1-(5-phospho-beta-D-ribosyl)imidazole-4-carboxamide = 5-formamido-1-(5-phospho-D-ribosyl)imidazole-4-carboxamide + (6S)-5,6,7,8-tetrahydrofolate. It carries out the reaction IMP + H2O = 5-formamido-1-(5-phospho-D-ribosyl)imidazole-4-carboxamide. The protein operates within purine metabolism; IMP biosynthesis via de novo pathway; 5-formamido-1-(5-phospho-D-ribosyl)imidazole-4-carboxamide from 5-amino-1-(5-phospho-D-ribosyl)imidazole-4-carboxamide (10-formyl THF route): step 1/1. It functions in the pathway purine metabolism; IMP biosynthesis via de novo pathway; IMP from 5-formamido-1-(5-phospho-D-ribosyl)imidazole-4-carboxamide: step 1/1. This Prochlorococcus marinus (strain NATL1A) protein is Bifunctional purine biosynthesis protein PurH.